We begin with the raw amino-acid sequence, 221 residues long: 7-cyano-7-deazaguanine synthase (221 aa).

10 to 20 (FSGGQDSTTCL) is a binding site for ATP. Residues cysteine 186, cysteine 195, cysteine 198, and cysteine 201 each contribute to the Zn(2+) site.

The protein belongs to the QueC family. In terms of assembly, homodimer. Requires Zn(2+) as cofactor.

The enzyme catalyses 7-carboxy-7-deazaguanine + NH4(+) + ATP = 7-cyano-7-deazaguanine + ADP + phosphate + H2O + H(+). Its pathway is purine metabolism; 7-cyano-7-deazaguanine biosynthesis. Its function is as follows. Catalyzes the ATP-dependent conversion of 7-carboxy-7-deazaguanine (CDG) to 7-cyano-7-deazaguanine (preQ(0)). In Anoxybacillus flavithermus (strain DSM 21510 / WK1), this protein is 7-cyano-7-deazaguanine synthase.